Here is a 232-residue protein sequence, read N- to C-terminus: tRNA (guanine-N(1)-)-methyltransferase (232 aa).

S-adenosyl-L-methionine is bound by residues G112 and 132-137 (IGDYIL).

It belongs to the RNA methyltransferase TrmD family. Homodimer.

It is found in the cytoplasm. It carries out the reaction guanosine(37) in tRNA + S-adenosyl-L-methionine = N(1)-methylguanosine(37) in tRNA + S-adenosyl-L-homocysteine + H(+). Its function is as follows. Specifically methylates guanosine-37 in various tRNAs. This is tRNA (guanine-N(1)-)-methyltransferase from Methylacidiphilum infernorum (isolate V4) (Methylokorus infernorum (strain V4)).